The primary structure comprises 265 residues: Secreted RxLR effector protein 16 (265 aa).

The N-terminal stretch at 1–19 (MRGAFYIAIALLIVRSRTA) is a signal peptide. The RxLR-dEER motif lies at 46 to 61 (RYLRGGLALSATNEER). N-linked (GlcNAc...) asparagine glycosylation is found at Asn170, Asn219, and Asn240.

This sequence belongs to the RxLR effector family. Post-translationally, N-glycosylated. The putative N-glycosylation site at position 240 is essential for cell death-inducing activity.

The protein resides in the secreted. It is found in the host nucleus. Effector that acts as an elicitor that induces cell death and promotes ROS accumulation in Nicotian benthamiana. RxLR16-triggered cell death is dependent on SGT1, HSP90 and RAR1, but independent of the somatic embryogenesis receptor-like kinase SERK3/BAK1, indicating that it acts independently of the detection of cell surface pattern recognition receptors. Enhances the expressional levels of defense-associated genes involved in the salicylic acid-, jasmonate acid-, and ethylene-mediated signal transduction, resulting in disease resistance. However, as some other Plasmopara viticola RxLR effectors including RxLR1, RxLR10, RxLR30 and RxLR25, can suppress defense responses and disease resistance induced by RxLR16, it may not trigger host cell death or immune responses during physiological infection under natural conditions. This chain is Secreted RxLR effector protein 16, found in Plasmopara viticola (Downy mildew of grapevine).